We begin with the raw amino-acid sequence, 347 residues long: Phenylalanine--tRNA ligase alpha subunit (347 aa).

Residue Glu261 coordinates Mg(2+).

The protein belongs to the class-II aminoacyl-tRNA synthetase family. Phe-tRNA synthetase alpha subunit type 1 subfamily. Tetramer of two alpha and two beta subunits. Requires Mg(2+) as cofactor.

It is found in the cytoplasm. The catalysed reaction is tRNA(Phe) + L-phenylalanine + ATP = L-phenylalanyl-tRNA(Phe) + AMP + diphosphate + H(+). The chain is Phenylalanine--tRNA ligase alpha subunit from Streptococcus pyogenes serotype M18 (strain MGAS8232).